A 375-amino-acid chain; its full sequence is 23S rRNA (uracil(747)-C(5))-methyltransferase RlmC (375 aa).

Positions 3, 11, 14, and 87 each coordinate [4Fe-4S] cluster. Residues Gln212, Phe241, Glu262, and Asn307 each contribute to the S-adenosyl-L-methionine site. The active-site Nucleophile is the Cys334.

This sequence belongs to the class I-like SAM-binding methyltransferase superfamily. RNA M5U methyltransferase family. RlmC subfamily.

It carries out the reaction uridine(747) in 23S rRNA + S-adenosyl-L-methionine = 5-methyluridine(747) in 23S rRNA + S-adenosyl-L-homocysteine + H(+). Functionally, catalyzes the formation of 5-methyl-uridine at position 747 (m5U747) in 23S rRNA. The chain is 23S rRNA (uracil(747)-C(5))-methyltransferase RlmC from Escherichia coli O157:H7.